Reading from the N-terminus, the 491-residue chain is uncharacterized protein (491 aa).

266-273 (GIQGTGKS) contacts ATP.

The protein belongs to the AAA ATPase family. Highly divergent.

It is found in the plastid. It localises to the chloroplast. This is an uncharacterized protein from Porphyra purpurea (Red seaweed).